The sequence spans 313 residues: Porphobilinogen deaminase (313 aa).

Cys242 carries the S-(dipyrrolylmethanemethyl)cysteine modification.

The protein belongs to the HMBS family. As to quaternary structure, monomer. Dipyrromethane is required as a cofactor.

It carries out the reaction 4 porphobilinogen + H2O = hydroxymethylbilane + 4 NH4(+). Its pathway is porphyrin-containing compound metabolism; protoporphyrin-IX biosynthesis; coproporphyrinogen-III from 5-aminolevulinate: step 2/4. Tetrapolymerization of the monopyrrole PBG into the hydroxymethylbilane pre-uroporphyrinogen in several discrete steps. The protein is Porphobilinogen deaminase of Photorhabdus laumondii subsp. laumondii (strain DSM 15139 / CIP 105565 / TT01) (Photorhabdus luminescens subsp. laumondii).